We begin with the raw amino-acid sequence, 679 residues long: Methionine--tRNA ligase (679 aa).

The 'HIGH' region signature appears at 14 to 24 (PYANGSIHLGH). Residues cysteine 145, cysteine 148, cysteine 158, and cysteine 161 each coordinate Zn(2+). The 'KMSKS' region signature appears at 331 to 335 (KMSKS). Lysine 334 contributes to the ATP binding site. A tRNA-binding domain is found at 577-679 (TFAAVDLRVA…SGAKPGQRIK (103 aa)).

The protein belongs to the class-I aminoacyl-tRNA synthetase family. MetG type 1 subfamily. Homodimer. Zn(2+) serves as cofactor.

The protein resides in the cytoplasm. It catalyses the reaction tRNA(Met) + L-methionine + ATP = L-methionyl-tRNA(Met) + AMP + diphosphate. In terms of biological role, is required not only for elongation of protein synthesis but also for the initiation of all mRNA translation through initiator tRNA(fMet) aminoacylation. This chain is Methionine--tRNA ligase, found in Pseudomonas putida (strain ATCC 700007 / DSM 6899 / JCM 31910 / BCRC 17059 / LMG 24140 / F1).